Reading from the N-terminus, the 311-residue chain is Pyrimidine-specific ribonucleoside hydrolase RihA (311 aa).

H240 is an active-site residue.

It belongs to the IUNH family. RihA subfamily.

Functionally, hydrolyzes with equal efficiency cytidine or uridine to ribose and cytosine or uracil, respectively. The polypeptide is Pyrimidine-specific ribonucleoside hydrolase RihA (Escherichia coli O9:H4 (strain HS)).